Reading from the N-terminus, the 89-residue chain is Small ribosomal subunit protein uS15 (89 aa).

This sequence belongs to the universal ribosomal protein uS15 family. As to quaternary structure, part of the 30S ribosomal subunit. Forms a bridge to the 50S subunit in the 70S ribosome, contacting the 23S rRNA.

Its function is as follows. One of the primary rRNA binding proteins, it binds directly to 16S rRNA where it helps nucleate assembly of the platform of the 30S subunit by binding and bridging several RNA helices of the 16S rRNA. Functionally, forms an intersubunit bridge (bridge B4) with the 23S rRNA of the 50S subunit in the ribosome. The protein is Small ribosomal subunit protein uS15 of Oenococcus oeni (strain ATCC BAA-331 / PSU-1).